The primary structure comprises 298 residues: Urease accessory protein UreD 3 (298 aa).

Positions 1 to 30 (MADEAGTRSAGGRPIPAAEPLRPALSRQRS) are disordered.

It belongs to the UreD family. As to quaternary structure, ureD, UreF and UreG form a complex that acts as a GTP-hydrolysis-dependent molecular chaperone, activating the urease apoprotein by helping to assemble the nickel containing metallocenter of UreC. The UreE protein probably delivers the nickel.

The protein resides in the cytoplasm. Functionally, required for maturation of urease via the functional incorporation of the urease nickel metallocenter. The chain is Urease accessory protein UreD 3 from Methylorubrum extorquens (strain PA1) (Methylobacterium extorquens).